The primary structure comprises 279 residues: NLP effector protein 9 (279 aa).

The signal sequence occupies residues 1-19 (MKISNLLGVLVVFLAVVKG). The short motif at 151–161 (AIMYAWYFPDI) is the Conserved undecapeptide motif element. Asn176 carries an N-linked (GlcNAc...) asparagine glycan.

It belongs to the Necrosis inducing protein (NPP1) family.

The protein localises to the secreted. Its function is as follows. Secreted effector that acts as a pathogen-associated molecular pattern (PAMP) recognized by the plant immune system. Seems not to induce necrosis in Nicotiana benthamiana leaves. The chain is NLP effector protein 9 from Plasmopara viticola (Downy mildew of grapevine).